The following is a 172-amino-acid chain: NADH-ubiquinone oxidoreductase chain 6 (172 aa).

5 consecutive transmembrane segments (helical) span residues 1–21 (MTYF…AVAS), 27–47 (YGVV…LSLG), 48–68 (ISFV…VVFV), 87–107 (VVGY…VGGF), and 138–158 (CGVG…FVVL).

Belongs to the complex I subunit 6 family.

Its subcellular location is the mitochondrion membrane. It carries out the reaction a ubiquinone + NADH + 5 H(+)(in) = a ubiquinol + NAD(+) + 4 H(+)(out). In terms of biological role, core subunit of the mitochondrial membrane respiratory chain NADH dehydrogenase (Complex I) that is believed to belong to the minimal assembly required for catalysis. Complex I functions in the transfer of electrons from NADH to the respiratory chain. The immediate electron acceptor for the enzyme is believed to be ubiquinone. The polypeptide is NADH-ubiquinone oxidoreductase chain 6 (MT-ND6) (Uria aalge (Common mure)).